The primary structure comprises 358 residues: Protein SGT1 homolog B (358 aa).

TPR repeat units follow at residues 2-35, 37-69, and 70-103; these read AKEL…DPNC, AFFA…EPTL, and AKAY…APNE. The CS domain occupies 157–246; sequence KPMFRHEFYQ…AEIITWASLE (90 aa). Residues 255–275 are disordered; that stretch reads PKPNVSSALSQRPVYPSSKPA. The SGS domain maps to 268–358; that stretch reads VYPSSKPAKD…DGMELKKWEY (91 aa).

Belongs to the SGT1 family. As to quaternary structure, interacts with RAR1 and HSP90-2. Interacts (via SGS domain) with HSC70-1 and HSC70-3.

The protein resides in the cytoplasm. Its subcellular location is the nucleus. Its function is as follows. Involved in plant innate immunity. Essential for race-specific resistance conferred by multiple R genes, including RPP7, recognizing different oomycete pathogen isolates like avirulent Hyaloperonospora arabidopsidis (downy mildew). Contributes additively with RAR1 to RPP5-dependent resistance. Not required for RPM1, RPS2, RPS4 and RPS5-mediated resistance. Functions as a negative regulator of RPS5 accumulation by assisting its degradation. May be involved in heat shock response by associating with HSC70-1 chaperone. Required for the SCF(TIR1)-mediated degradation of Aux/IAA proteins, but maybe not for SCF(TIR1) assembly or binding to its Aux/IAA substrates. Probably required for SCF-mediated ubiquitination, by coupling HSP90 to SCF complex for ubiquitination of HSP90 client proteins. Required for the coronatine/jasmonic acid-mediated signal transduction pathway. This is Protein SGT1 homolog B from Arabidopsis thaliana (Mouse-ear cress).